The sequence spans 244 residues: Tegument protein UL51 (244 aa).

A lipid anchor (S-palmitoyl cysteine; by host) is attached at C9. The tract at residues 178 to 244 (GVTEAPSLGH…SRAAPCVLGQ (67 aa)) is disordered. Low complexity predominate over residues 221–244 (PRPTASPTAPRPGPSRAAPCVLGQ).

Belongs to the herpesviridae UL51 family. Oligomerizes. Interacts with UL7; this interaction mediates UL7 incorporation to virions. Interacts with UL14. Post-translationally, phosphorylated. Palmitoylation is necessary for Golgi localization.

The protein resides in the virion tegument. The protein localises to the host cytoplasm. It is found in the host Golgi apparatus. In terms of biological role, plays several roles during the time course of infection, including egress of virus particles from the perinuclear space and secondary envelopment of cytoplasmic capsids that bud into specific trans-Golgi network (TGN)-derived membranes. Plays also an essential role in the maintenance of host cytoplasmic viral assembly center (cVAC) morphology in primary host neuronal cells. This Homo sapiens (Human) protein is Tegument protein UL51.